The sequence spans 29 residues: Cytochrome b6-f complex subunit 8 (29 aa).

A helical transmembrane segment spans residues 3–23 (LITITWASVMVAFTFSLSLVV).

It belongs to the PetN family. In terms of assembly, the 4 large subunits of the cytochrome b6-f complex are cytochrome b6, subunit IV (17 kDa polypeptide, PetD), cytochrome f and the Rieske protein, while the 4 small subunits are PetG, PetL, PetM and PetN. The complex functions as a dimer.

The protein resides in the plastid. It is found in the chloroplast thylakoid membrane. Functionally, component of the cytochrome b6-f complex, which mediates electron transfer between photosystem II (PSII) and photosystem I (PSI), cyclic electron flow around PSI, and state transitions. The protein is Cytochrome b6-f complex subunit 8 of Chaetosphaeridium globosum (Charophycean green alga).